Reading from the N-terminus, the 459-residue chain is Exodeoxyribonuclease 7 large subunit (459 aa).

This sequence belongs to the XseA family. In terms of assembly, heterooligomer composed of large and small subunits.

It localises to the cytoplasm. It catalyses the reaction Exonucleolytic cleavage in either 5'- to 3'- or 3'- to 5'-direction to yield nucleoside 5'-phosphates.. Bidirectionally degrades single-stranded DNA into large acid-insoluble oligonucleotides, which are then degraded further into small acid-soluble oligonucleotides. In Pseudomonas aeruginosa (strain ATCC 15692 / DSM 22644 / CIP 104116 / JCM 14847 / LMG 12228 / 1C / PRS 101 / PAO1), this protein is Exodeoxyribonuclease 7 large subunit.